The primary structure comprises 64 residues: Large ribosomal subunit protein bL35 (64 aa).

The segment covering 1–28 (MSKAKTHSGAAKRFKKTASGYKHKHAFK) has biased composition (basic residues). The segment at 1-51 (MSKAKTHSGAAKRFKKTASGYKHKHAFKSHILTKMTTKRKRQLRGTSLLNA) is disordered.

This sequence belongs to the bacterial ribosomal protein bL35 family.

This Saccharophagus degradans (strain 2-40 / ATCC 43961 / DSM 17024) protein is Large ribosomal subunit protein bL35.